The following is a 285-amino-acid chain: (3S)-malyl-CoA thioesterase (285 aa).

Substrate-binding residues include R70 and E122. Mg(2+) is bound by residues E122 and D148.

It belongs to the HpcH/HpaI aldolase family. Homodimer or homotrimer. Mg(2+) is required as a cofactor.

It catalyses the reaction (S)-malyl-CoA + H2O = (S)-malate + CoA + H(+). Functionally, catalyzes the hydrolysis of (3S)-malyl-CoA to (3S)-malate and free CoA. Inactive towards beta-methylmalyl-CoA and other CoA esters. This chain is (3S)-malyl-CoA thioesterase, found in Cereibacter sphaeroides (strain ATCC 17029 / ATH 2.4.9) (Rhodobacter sphaeroides).